Here is a 510-residue protein sequence, read N- to C-terminus: Maturase K (510 aa).

This sequence belongs to the intron maturase 2 family. MatK subfamily.

It localises to the plastid. The protein resides in the chloroplast. Usually encoded in the trnK tRNA gene intron. Probably assists in splicing its own and other chloroplast group II introns. The chain is Maturase K from Populus alba (White poplar).